A 277-amino-acid polypeptide reads, in one-letter code: 3-methyl-2-oxobutanoate hydroxymethyltransferase (277 aa).

Mg(2+) is bound by residues aspartate 43 and aspartate 82. 3-methyl-2-oxobutanoate-binding positions include 43–44 (DS), aspartate 82, and lysine 112. Glutamate 114 lines the Mg(2+) pocket. Catalysis depends on glutamate 181, which acts as the Proton acceptor.

The protein belongs to the PanB family. Homodecamer; pentamer of dimers. The cofactor is Mg(2+).

Its subcellular location is the cytoplasm. The enzyme catalyses 3-methyl-2-oxobutanoate + (6R)-5,10-methylene-5,6,7,8-tetrahydrofolate + H2O = 2-dehydropantoate + (6S)-5,6,7,8-tetrahydrofolate. It participates in cofactor biosynthesis; (R)-pantothenate biosynthesis; (R)-pantoate from 3-methyl-2-oxobutanoate: step 1/2. Catalyzes the reversible reaction in which hydroxymethyl group from 5,10-methylenetetrahydrofolate is transferred onto alpha-ketoisovalerate to form ketopantoate. This chain is 3-methyl-2-oxobutanoate hydroxymethyltransferase, found in Bacillus velezensis (strain DSM 23117 / BGSC 10A6 / LMG 26770 / FZB42) (Bacillus amyloliquefaciens subsp. plantarum).